A 326-amino-acid polypeptide reads, in one-letter code: MSFNAFASSLSKKLQEISTSVSEKTQELPSLAQSTQRMVQERLGQVTDISQLPREYTELEDKVDTIKLIYNHFLGVTAIYENGSYDYPKYINESVNEFSRSVASKLTELTHATSASEAQNILVAPGPIKEPKTLNYALSKVALNSSECLNKMFPTEEQPLASALLQFSDVQAKIAQARIQQDTLIQTKFNKNLRERLSFEIGKADKCRKDVHSMRLRYDVARTNLANNKKPEKEASLRVQMETLEDQFAQVTEDATVCLQEVISHANFSEDLKELAKAQAEYFETSAGLMKEFLSNSFAEEPEAKPEVAEEEKPQTAISMNDEDDA.

Serine 2 is modified (N-acetylserine). The residue at position 2 (serine 2) is a Phosphoserine. Residues lysine 13, lysine 305, and lysine 313 each participate in a glycyl lysine isopeptide (Lys-Gly) (interchain with G-Cter in ubiquitin) cross-link. Residues 299-326 form a disordered region; sequence AEEPEAKPEVAEEEKPQTAISMNDEDDA. A compositionally biased stretch (basic and acidic residues) spans 302 to 314; the sequence is PEAKPEVAEEEKP. Serine 319 is subject to Phosphoserine.

The protein localises to the golgi apparatus membrane. This Saccharomyces cerevisiae (strain ATCC 204508 / S288c) (Baker's yeast) protein is Protein GVP36 (GVP36).